We begin with the raw amino-acid sequence, 621 residues long: tRNA uridine 5-carboxymethylaminomethyl modification enzyme MnmG (621 aa).

9 to 14 (GGGHAG) serves as a coordination point for FAD. An NAD(+)-binding site is contributed by 270 to 284 (GPRYCPSIEDKIVKF).

Belongs to the MnmG family. Homodimer. Heterotetramer of two MnmE and two MnmG subunits. The cofactor is FAD.

Its subcellular location is the cytoplasm. Its function is as follows. NAD-binding protein involved in the addition of a carboxymethylaminomethyl (cmnm) group at the wobble position (U34) of certain tRNAs, forming tRNA-cmnm(5)s(2)U34. The sequence is that of tRNA uridine 5-carboxymethylaminomethyl modification enzyme MnmG from Borrelia garinii subsp. bavariensis (strain ATCC BAA-2496 / DSM 23469 / PBi) (Borreliella bavariensis).